A 135-amino-acid chain; its full sequence is Surface presentation of antigens protein SpaK (135 aa).

This sequence belongs to the SpaK family.

Functionally, involved in a secretory pathway responsible for the surface presentation of determinants needed for the entry of Salmonella species into mammalian cells. The protein is Surface presentation of antigens protein SpaK (spaK) of Salmonella typhi.